Reading from the N-terminus, the 350-residue chain is tRNA uridine(34) hydroxylase (350 aa).

The region spanning 146-240 (DDPDAVFIDM…YARRAREQGL (95 aa)) is the Rhodanese domain. The active-site Cysteine persulfide intermediate is Cys200. Residues 319–328 (RRRRAGRENG) are compositionally biased toward basic and acidic residues. The interval 319–350 (RRRRAGRENGNKIFNKSRGRLNSKLSIPDPAE) is disordered.

This sequence belongs to the TrhO family.

It carries out the reaction uridine(34) in tRNA + AH2 + O2 = 5-hydroxyuridine(34) in tRNA + A + H2O. Catalyzes oxygen-dependent 5-hydroxyuridine (ho5U) modification at position 34 in tRNAs. This chain is tRNA uridine(34) hydroxylase, found in Salmonella heidelberg (strain SL476).